Consider the following 1785-residue polypeptide: 1,3-beta-glucan synthase component FKS3 (1785 aa).

8 consecutive transmembrane segments (helical) span residues 337-357 (FWIIHFAPFWFFTTFNSPTLY), 375-395 (LSVIAFGGTIACLVQILATVF), 415-435 (IGLLFCLAINLGPSVYVLGFF), 444-464 (AYIVSIVQLIIAFLTTFFFAV), 508-528 (LWVFVYLAKYIESYFFLTLSL), 547-567 (YLLGPILCKWQAKITLVLMLL), 572-592 (LFFLDTYLWYIICNCIFSIVL), and 712-732 (LATPISEPVPVDCMPTFTVLV). 2 stretches are compositionally biased toward basic and acidic residues: residues 791 to 801 (ESSHDEDRLEI) and 815 to 824 (DHTESRKLPT). Residues 791–824 (ESSHDEDRLEIPDALYDPRSSPLSDHTESRKLPT) are disordered. N-linked (GlcNAc...) asparagine glycosylation is found at Asn844, Asn874, Asn955, Asn1002, and Asn1170. 3 helical membrane-spanning segments follow: residues 1215-1235 (LFISFSVQLFFVLLLNLGALN), 1268-1288 (VSIFVLSIFIVFFIAFAPLLI), and 1303-1323 (FLHHLLSMAPLFEVFVCQVYS). Residue Asn1360 is glycosylated (N-linked (GlcNAc...) asparagine). A run of 5 helical transmembrane segments spans residues 1370-1390 (FFMLLFAIISMWQPALLWFWI), 1394-1414 (SMCFAPFIFNPHQFAFMDFFI), 1475-1495 (FAELFLPFCVFLFNFTAFSFI), 1514-1534 (LLVTFLPIFLNSIVLFLLFWV), and 1549-1569 (AGAVIAFIAHTFSVLVYLLDF). Asn1579 carries an N-linked (GlcNAc...) asparagine glycan. 3 helical membrane passes run 1585 to 1605 (ILLITCINMHLILFKVFTTIF), 1655 to 1675 (FFLGHFLLFIQTPIILLPFID), and 1713 to 1733 (FSLYFVMLGVLLFMLIAPFFA). N-linked (GlcNAc...) asparagine glycosylation is present at Asn1761.

Belongs to the glycosyltransferase 48 family. N-glycosylated.

It localises to the mitochondrion. It is found in the membrane. It catalyses the reaction [(1-&gt;3)-beta-D-glucosyl](n) + UDP-alpha-D-glucose = [(1-&gt;3)-beta-D-glucosyl](n+1) + UDP + H(+). In terms of biological role, required for spore wall assembly. The chain is 1,3-beta-glucan synthase component FKS3 (FKS3) from Saccharomyces cerevisiae (strain ATCC 204508 / S288c) (Baker's yeast).